A 232-amino-acid polypeptide reads, in one-letter code: Ubiquitin carboxyl-terminal hydrolase UCHL3 (232 aa).

Residues 6 to 225 enclose the UCH catalytic domain; the sequence is IWTPLESNPD…LRFSALAVIP (220 aa). Residues 10-14 form an interaction with ubiquitin region; sequence LESNP. Residue Cys92 is the Nucleophile of the active site. The tract at residues 151–159 is crossover loop which restricts access of large ubiquitin adducts to the active site; it reads QVENRDDIL. The interval 163-165 is interaction with ubiquitin; the sequence is THF. Residue His164 is the Proton donor of the active site.

The protein belongs to the peptidase C12 family.

It carries out the reaction Thiol-dependent hydrolysis of ester, thioester, amide, peptide and isopeptide bonds formed by the C-terminal Gly of ubiquitin (a 76-residue protein attached to proteins as an intracellular targeting signal).. Its function is as follows. Thiol protease that recognizes and hydrolyzes a peptide bond at the C-terminal glycine of either ubiquitin or NEDD8. Essential for parasite blood stage survival. The protein is Ubiquitin carboxyl-terminal hydrolase UCHL3 of Plasmodium falciparum (isolate 3D7).